The chain runs to 160 residues: SPbeta prophage-derived uncharacterized protein YokE (160 aa).

The polypeptide is SPbeta prophage-derived uncharacterized protein YokE (yokE) (Bacillus subtilis (strain 168)).